The chain runs to 137 residues: Large ribosomal subunit protein uL16 (137 aa).

Belongs to the universal ribosomal protein uL16 family. In terms of assembly, part of the 50S ribosomal subunit.

In terms of biological role, binds 23S rRNA and is also seen to make contacts with the A and possibly P site tRNAs. The polypeptide is Large ribosomal subunit protein uL16 (Streptococcus thermophilus (strain CNRZ 1066)).